The sequence spans 447 residues: Ribosomal protein uS12 methylthiotransferase RimO (447 aa).

The MTTase N-terminal domain maps to 4–114; the sequence is PKVGFVSLGC…VMEAVHEYVP (111 aa). [4Fe-4S] cluster is bound by residues cysteine 13, cysteine 49, cysteine 78, cysteine 147, cysteine 151, and cysteine 154. Residues 133–370 enclose the Radical SAM core domain; that stretch reads LTPKHYAYLK…MQVQQQISAA (238 aa). Residues 373–443 enclose the TRAM domain; sequence QKRIGQTMTV…EYDLFAKLIK (71 aa).

It belongs to the methylthiotransferase family. RimO subfamily. The cofactor is [4Fe-4S] cluster.

It is found in the cytoplasm. The enzyme catalyses L-aspartate(89)-[ribosomal protein uS12]-hydrogen + (sulfur carrier)-SH + AH2 + 2 S-adenosyl-L-methionine = 3-methylsulfanyl-L-aspartate(89)-[ribosomal protein uS12]-hydrogen + (sulfur carrier)-H + 5'-deoxyadenosine + L-methionine + A + S-adenosyl-L-homocysteine + 2 H(+). In terms of biological role, catalyzes the methylthiolation of an aspartic acid residue of ribosomal protein uS12. This chain is Ribosomal protein uS12 methylthiotransferase RimO, found in Acinetobacter baumannii (strain AB307-0294).